A 272-amino-acid polypeptide reads, in one-letter code: NH(3)-dependent NAD(+) synthetase (272 aa).

43-50 (GLSGGQDS) is an ATP binding site. Residue aspartate 49 coordinates Mg(2+). Arginine 138 serves as a coordination point for deamido-NAD(+). Threonine 158 contacts ATP. Glutamate 163 is a binding site for Mg(2+). Residues lysine 171 and aspartate 178 each coordinate deamido-NAD(+). Positions 187 and 209 each coordinate ATP. Deamido-NAD(+) is bound at residue 258 to 259 (HK).

The protein belongs to the NAD synthetase family. As to quaternary structure, homodimer.

The catalysed reaction is deamido-NAD(+) + NH4(+) + ATP = AMP + diphosphate + NAD(+) + H(+). It participates in cofactor biosynthesis; NAD(+) biosynthesis; NAD(+) from deamido-NAD(+) (ammonia route): step 1/1. In terms of biological role, catalyzes the ATP-dependent amidation of deamido-NAD to form NAD. Uses ammonia as a nitrogen source. This chain is NH(3)-dependent NAD(+) synthetase, found in Halalkalibacterium halodurans (strain ATCC BAA-125 / DSM 18197 / FERM 7344 / JCM 9153 / C-125) (Bacillus halodurans).